The chain runs to 208 residues: FMN-dependent NADH:quinone oxidoreductase 1 (208 aa).

This sequence belongs to the azoreductase type 1 family. As to quaternary structure, homodimer. FMN is required as a cofactor.

It carries out the reaction 2 a quinone + NADH + H(+) = 2 a 1,4-benzosemiquinone + NAD(+). The enzyme catalyses N,N-dimethyl-1,4-phenylenediamine + anthranilate + 2 NAD(+) = 2-(4-dimethylaminophenyl)diazenylbenzoate + 2 NADH + 2 H(+). In terms of biological role, quinone reductase that provides resistance to thiol-specific stress caused by electrophilic quinones. Its function is as follows. Also exhibits azoreductase activity. Catalyzes the reductive cleavage of the azo bond in aromatic azo compounds to the corresponding amines. This chain is FMN-dependent NADH:quinone oxidoreductase 1, found in Bacillus thuringiensis subsp. konkukian (strain 97-27).